Reading from the N-terminus, the 190-residue chain is Pyridoxal 5'-phosphate synthase subunit PdxT (190 aa).

Glycine 46–serine 48 contacts L-glutamine. Cysteine 78 acts as the Nucleophile in catalysis. Residues arginine 105 and isoleucine 133–arginine 134 contribute to the L-glutamine site. Active-site charge relay system residues include histidine 169 and glutamate 171.

The protein belongs to the glutaminase PdxT/SNO family. As to quaternary structure, in the presence of PdxS, forms a dodecamer of heterodimers. Only shows activity in the heterodimer.

It carries out the reaction aldehydo-D-ribose 5-phosphate + D-glyceraldehyde 3-phosphate + L-glutamine = pyridoxal 5'-phosphate + L-glutamate + phosphate + 3 H2O + H(+). It catalyses the reaction L-glutamine + H2O = L-glutamate + NH4(+). Its pathway is cofactor biosynthesis; pyridoxal 5'-phosphate biosynthesis. Catalyzes the hydrolysis of glutamine to glutamate and ammonia as part of the biosynthesis of pyridoxal 5'-phosphate. The resulting ammonia molecule is channeled to the active site of PdxS. This is Pyridoxal 5'-phosphate synthase subunit PdxT from Niallia circulans (Bacillus circulans).